Here is an 870-residue protein sequence, read N- to C-terminus: Leucine--tRNA ligase (870 aa).

The 'HIGH' region motif lies at 43 to 53 (PYPSGRLHMGH). A 'KMSKS' region motif is present at residues 626–630 (KMSKS). Lys629 contributes to the ATP binding site.

The protein belongs to the class-I aminoacyl-tRNA synthetase family.

Its subcellular location is the cytoplasm. The catalysed reaction is tRNA(Leu) + L-leucine + ATP = L-leucyl-tRNA(Leu) + AMP + diphosphate. The chain is Leucine--tRNA ligase from Pseudoalteromonas atlantica (strain T6c / ATCC BAA-1087).